Reading from the N-terminus, the 729-residue chain is Cullin-6 (729 aa).

Residues 659-720 (DRKYEIKACI…EQLYIRRSEN (62 aa)) form the Cullin neddylation domain. Residue lysine 673 forms a Glycyl lysine isopeptide (Lys-Gly) (interchain with G-Cter in NEDD8) linkage.

The protein belongs to the cullin family. As to quaternary structure, probably interacts with skr-3. Neddylated; which enhances the ubiquitination activity of SCF-like complex.

Probable core component of cullin-based SCF-like E3 ubiquitin-protein ligase complexes which mediate the ubiquitination and subsequent proteasomal degradation of target proteins. The polypeptide is Cullin-6 (cul-6) (Caenorhabditis elegans).